The primary structure comprises 207 residues: Vexin (207 aa).

The tract at residues 56-100 (ELLPHRGDRRDPGDRRRFGRLQTARPPTAHPAKASARPVGISEPK) is disordered. Basic and acidic residues predominate over residues 58-71 (LPHRGDRRDPGDRR).

It belongs to the vexin family.

Its subcellular location is the cell membrane. The protein localises to the nucleus. Its function is as follows. Required for neurogenesis in the neural plate and retina. Strongly cooperates with neural bHLH factors to promote neurogenesis. In Homo sapiens (Human), this protein is Vexin.